We begin with the raw amino-acid sequence, 272 residues long: Ribosomal RNA small subunit methyltransferase A (272 aa).

S-adenosyl-L-methionine-binding residues include histidine 10, leucine 12, glycine 37, glutamate 57, aspartate 82, and asparagine 98.

The protein belongs to the class I-like SAM-binding methyltransferase superfamily. rRNA adenine N(6)-methyltransferase family. RsmA subfamily.

The protein localises to the cytoplasm. The catalysed reaction is adenosine(1518)/adenosine(1519) in 16S rRNA + 4 S-adenosyl-L-methionine = N(6)-dimethyladenosine(1518)/N(6)-dimethyladenosine(1519) in 16S rRNA + 4 S-adenosyl-L-homocysteine + 4 H(+). Its function is as follows. Specifically dimethylates two adjacent adenosines (A1518 and A1519) in the loop of a conserved hairpin near the 3'-end of 16S rRNA in the 30S particle. May play a critical role in biogenesis of 30S subunits. The sequence is that of Ribosomal RNA small subunit methyltransferase A from Gloeobacter violaceus (strain ATCC 29082 / PCC 7421).